A 122-amino-acid polypeptide reads, in one-letter code: NADH-quinone oxidoreductase subunit A (122 aa).

A run of 3 helical transmembrane segments spans residues 12–32 (IIIF…VNLI), 66–86 (LVAI…PWAI), and 91–111 (IGGL…VGFI).

It belongs to the complex I subunit 3 family. As to quaternary structure, NDH-1 is composed of 14 different subunits. Subunits NuoA, H, J, K, L, M, N constitute the membrane sector of the complex.

The protein localises to the cell inner membrane. The enzyme catalyses a quinone + NADH + 5 H(+)(in) = a quinol + NAD(+) + 4 H(+)(out). Functionally, NDH-1 shuttles electrons from NADH, via FMN and iron-sulfur (Fe-S) centers, to quinones in the respiratory chain. The immediate electron acceptor for the enzyme in this species is believed to be ubiquinone. Couples the redox reaction to proton translocation (for every two electrons transferred, four hydrogen ions are translocated across the cytoplasmic membrane), and thus conserves the redox energy in a proton gradient. The chain is NADH-quinone oxidoreductase subunit A from Pelagibacter ubique (strain HTCC1062).